The chain runs to 502 residues: Probable glycine dehydrogenase (decarboxylating) subunit 2 (502 aa).

K273 bears the N6-(pyridoxal phosphate)lysine mark.

The protein belongs to the GcvP family. C-terminal subunit subfamily. As to quaternary structure, the glycine cleavage system is composed of four proteins: P, T, L and H. In this organism, the P 'protein' is a heterodimer of two subunits. The cofactor is pyridoxal 5'-phosphate.

The catalysed reaction is N(6)-[(R)-lipoyl]-L-lysyl-[glycine-cleavage complex H protein] + glycine + H(+) = N(6)-[(R)-S(8)-aminomethyldihydrolipoyl]-L-lysyl-[glycine-cleavage complex H protein] + CO2. In terms of biological role, the glycine cleavage system catalyzes the degradation of glycine. The P protein binds the alpha-amino group of glycine through its pyridoxal phosphate cofactor; CO(2) is released and the remaining methylamine moiety is then transferred to the lipoamide cofactor of the H protein. The polypeptide is Probable glycine dehydrogenase (decarboxylating) subunit 2 (Thermococcus gammatolerans (strain DSM 15229 / JCM 11827 / EJ3)).